The sequence spans 545 residues: Lysine--tRNA ligase (545 aa).

The 'HIGH' region motif lies at 42–50 (PSGVPHIGH). Residues 307 to 311 (PLSSS) carry the 'KMSKS' region motif.

The protein belongs to the class-I aminoacyl-tRNA synthetase family.

The protein localises to the cytoplasm. It catalyses the reaction tRNA(Lys) + L-lysine + ATP = L-lysyl-tRNA(Lys) + AMP + diphosphate. The sequence is that of Lysine--tRNA ligase from Haloarcula marismortui (strain ATCC 43049 / DSM 3752 / JCM 8966 / VKM B-1809) (Halobacterium marismortui).